The primary structure comprises 270 residues: Undecaprenyl-diphosphatase 2 (270 aa).

The next 8 membrane-spanning stretches (helical) occupy residues 1-21, 39-59, 87-107, 114-134, 147-167, 190-210, 221-241, and 247-267; these read MDLI…FLPV, QGLA…VWYF, WAVI…KGFI, PLVI…SDVV, LSWK…IPGT, FSFL…TLDL, AMGL…HFFL, and VGML…LVLF.

It belongs to the UppP family.

It is found in the cell inner membrane. The catalysed reaction is di-trans,octa-cis-undecaprenyl diphosphate + H2O = di-trans,octa-cis-undecaprenyl phosphate + phosphate + H(+). Functionally, catalyzes the dephosphorylation of undecaprenyl diphosphate (UPP). Confers resistance to bacitracin. This Stutzerimonas stutzeri (strain A1501) (Pseudomonas stutzeri) protein is Undecaprenyl-diphosphatase 2.